Here is a 512-residue protein sequence, read N- to C-terminus: MNTVQKAIELILHKGLRKYKSKNSKAGLVSIANQEKFESKVLNGKKNKKGSIFITRKKEDLRAKFGTRGVVLSSEEAVLDHVGQASHWTPNVYNFGTYGQNGLRTIVGHTEKNLQQINCFVIDIDSKSFPMTAINDVALNAGFGVPTMILETTKGYQVYYVLDKAVYVSNNKNFIAIKSAKRISQNLREMFADSLPNVDLTCNHFGFFRMPSVQNIVMFFEENVYTFKELQEWSKRQDDNKGNEQFHNVIESPFAKNAPVEQPKQMDELWFKQVISCTNVSPKQTKAGRNNAIFTLSLACFQSQYAIKDTMDLMDQFNSNLEQPLEHTEVRGIVMSAYSGKYQAAHKDYIERLLQTYGMGQASAFRAPSVLWKKHKKQRKDRVRSHWHEWEADIITFLSMNSNNKPVLYFTQSELCEALNVPRSTLNTVLKKSTKIYKTVEGKGKTAKTGLSTLGMLIAFALKENGKRRESYLNYLQGLFPKTGNILEQAKTSNVMEEQETLYGILEGLPAG.

Its function is as follows. Essential for replication. Binds specifically to a 60-bp region corresponding to the putative origin of replication of pXO2. Also binds nonspecifically to single-stranded DNA with lower affinity. The polypeptide is Replication initiation protein (repS) (Bacillus anthracis).